Here is a 166-residue protein sequence, read N- to C-terminus: MRIDTSELCDIYLDQVDVVDPIFSSFGGVQAFYGKVTTVKCFETNGLIEEILEENGEGRVLVIDGGGSIRRALIDAELARLAADNHWEGIIVYGAIRQLSELENIEIGIHALAPIPVSADESNYGESDIPVNFGGVTFFPEDYIYADLTGIILSQEPLDLDELNAE.

Belongs to the RraA family. As to quaternary structure, homotrimer. Binds to both RNA-binding sites in the C-terminal region of Rne and to RhlB.

The protein resides in the cytoplasm. Functionally, globally modulates RNA abundance by binding to RNase E (Rne) and regulating its endonucleolytic activity. Can modulate Rne action in a substrate-dependent manner by altering the composition of the degradosome. Modulates RNA-binding and helicase activities of the degradosome. This Actinobacillus succinogenes (strain ATCC 55618 / DSM 22257 / CCUG 43843 / 130Z) protein is Regulator of ribonuclease activity A.